The primary structure comprises 1087 residues: Apoptosis-stimulating of p53 protein 1 (1087 aa).

Positions 82–122 are disordered; the sequence is HEDSPTESSEQGARQTQEQRTQRSVVNVPGEKRTENGVGNP. A compositionally biased stretch (polar residues) spans 87–106; the sequence is TESSEQGARQTQEQRTQRSV. Residues serine 332 and serine 335 each carry the phosphoserine modification. Disordered stretches follow at residues 374-415, 442-721, and 734-878; these read SSAA…GMEG, IGKG…PNIQ, and GMEG…TGHG. A compositionally biased stretch (polar residues) spans 393-405; it reads KQNSASVKSTQMT. Positions 445 to 458 are enriched in pro residues; the sequence is GPPPIPGVGKPLPP. Low complexity predominate over residues 459 to 476; it reads SYGTYPSSGPLGPGSTSS. Residues 506 to 520 are compositionally biased toward polar residues; sequence NAPQPGSSQQIQQRI. The segment covering 523 to 536 has biased composition (pro residues); the sequence is PPSPTYPPAGPPAF. At arginine 552 the chain carries Asymmetric dimethylarginine. Over residues 570–589 the composition is skewed to polar residues; that stretch reads QTVNSSSIYSMYLQQATPPK. Residues 610-625 are compositionally biased toward low complexity; the sequence is PVLPSGSASPSPLPFL. Serine 679 and serine 708 each carry phosphoserine. The segment covering 805–831 has biased composition (polar residues); it reads PQTTHQTAEPTEDNNNNVAPVPSTEQI. ANK repeat units follow at residues 917 to 949 and 950 to 982; these read EGITPLHNAVCAGHHHIVKFLLDFGVNVNAADS and DGWTPLHCAASCNSVHLCKQLVESGAAIFASTI. The region spanning 1016 to 1078 is the SH3 domain; that stretch reads MNKGTVYALW…PKNLLGLYPR (63 aa).

The protein belongs to the ASPP family. Interacts with P53/TP53; the interaction promotes pro-apoptotic activity.

The protein resides in the cytoplasm. It localises to the nucleus. In terms of biological role, regulator that plays a central role in regulation of apoptosis via its interaction with p53/TP53. Regulates TP53 by enhancing the DNA binding and transactivation function of TP53 on the promoters of proapoptotic genes in vivo. In Mus musculus (Mouse), this protein is Apoptosis-stimulating of p53 protein 1 (Ppp1r13b).